The following is a 130-amino-acid chain: Small ribosomal subunit protein uS9 (130 aa).

The segment at 98–130 is disordered; the sequence is LKRAGLLTRDPRMKERKKPGLKKARRSPQFSKR. Positions 111–130 are enriched in basic residues; sequence KERKKPGLKKARRSPQFSKR.

This sequence belongs to the universal ribosomal protein uS9 family.

The sequence is that of Small ribosomal subunit protein uS9 from Staphylococcus haemolyticus (strain JCSC1435).